The following is a 427-amino-acid chain: Putative zinc protease AlbF (427 aa).

Histidine 66 contributes to the Zn(2+) binding site. Glutamate 69 functions as the Proton acceptor in the catalytic mechanism. Residues histidine 70 and glutamate 142 each contribute to the Zn(2+) site.

Belongs to the peptidase M16 family. The cofactor is Zn(2+).

Functionally, required for production of the bacteriocin subtilosin. Could catalyze some step in the processing of presubtilosin. In Bacillus subtilis, this protein is Putative zinc protease AlbF (albF).